The chain runs to 247 residues: 7-cyano-7-deazaguanine synthase (247 aa).

21 to 31 serves as a coordination point for ATP; it reads FSGGQDSTACL. Zn(2+) is bound by residues Cys209, Cys224, Cys227, and Cys230.

The protein belongs to the QueC family. Requires Zn(2+) as cofactor.

The catalysed reaction is 7-carboxy-7-deazaguanine + NH4(+) + ATP = 7-cyano-7-deazaguanine + ADP + phosphate + H2O + H(+). It participates in purine metabolism; 7-cyano-7-deazaguanine biosynthesis. Functionally, catalyzes the ATP-dependent conversion of 7-carboxy-7-deazaguanine (CDG) to 7-cyano-7-deazaguanine (preQ(0)). The sequence is that of 7-cyano-7-deazaguanine synthase from Halorhodospira halophila (strain DSM 244 / SL1) (Ectothiorhodospira halophila (strain DSM 244 / SL1)).